We begin with the raw amino-acid sequence, 570 residues long: Structure-specific endonuclease subunit EME1 (570 aa).

Positions 1-14 (MALRRLSLSRLSTE) are enriched in low complexity. Positions 1–86 (MALRRLSLSR…AGPVRVLSSS (86 aa)) are disordered. A phosphoserine mark is found at S12 and S15. Low complexity predominate over residues 68-79 (PSAAGAPPQAGP). Phosphoserine occurs at positions 84, 85, and 87. Residue K103 forms a Glycyl lysine isopeptide (Lys-Gly) (interchain with G-Cter in SUMO2) linkage. S117 carries the phosphoserine modification. Over residues 118–130 (SLKTGLDGQNNAS) the composition is skewed to polar residues. 3 disordered regions span residues 118–147 (SLKTGLDGQNNASAPCDWKRQPWPKIPDVP), 185–231 (KTNS…ERKK), and 370–400 (RPQNPPRRRKSGMANKQAKAKHQQRQESSTG). Glycyl lysine isopeptide (Lys-Gly) (interchain with G-Cter in SUMO2) cross-links involve residues K136 and K142. Over residues 218 to 231 (SRKENTPRQHERKK) the composition is skewed to basic and acidic residues. Residues 249–456 (KHIVVVLDPV…PFKKLRDQVT (208 aa)) are nuclease-like domain; forms the post-nick DNA binding interface and is involved in DNA recognition and bending. A helix-hairpin-helix (2HhH); forms the pre-nick DNA binding interface and is involved in DNA recognition and bending region spans residues 476–570 (RGLALIWRRQ…QPDLILDSVD (95 aa)).

Belongs to the EME1/MMS4 family. Part of the heterodimeric MUS81-EME1 complex. Weakly expressed in brain, heart, kidney, liver, lung, muscle, skin, small intestine, spleen, stomach, testis and thymus. Expressed in bone marrow. Also expressed in embryonic stem cells (ES cells).

It is found in the nucleus. The protein localises to the nucleolus. Non-catalytic subunit of the structure-specific, heterodimeric DNA endonuclease MUS81-EME1 which is involved in the maintenance of genome stability. In the complex, EME1 is required for DNA cleavage, participating in DNA recognition and bending. MUS81-EME1 cleaves 3'-flaps and nicked Holliday junctions, and exhibit limited endonuclease activity with 5' flaps and nicked double-stranded DNAs. Active during prometaphase, MUS81-EME1 resolves mitotic recombination intermediates, including Holliday junctions, which form during homologous recombination. The sequence is that of Structure-specific endonuclease subunit EME1 from Mus musculus (Mouse).